Reading from the N-terminus, the 66-residue chain is MKASELRAKDVAALEQEVKDLLKAHFGLRMQKGTQQLGNTASLRLTRRDIARAKTILAEKKKGAAQ.

Belongs to the universal ribosomal protein uL29 family.

The polypeptide is Large ribosomal subunit protein uL29 (Methylibium petroleiphilum (strain ATCC BAA-1232 / LMG 22953 / PM1)).